Reading from the N-terminus, the 91-residue chain is Probable Fe(2+)-trafficking protein (91 aa).

The protein belongs to the Fe(2+)-trafficking protein family. As to quaternary structure, monomer.

Could be a mediator in iron transactions between iron acquisition and iron-requiring processes, such as synthesis and/or repair of Fe-S clusters in biosynthetic enzymes. The chain is Probable Fe(2+)-trafficking protein from Escherichia coli O7:K1 (strain IAI39 / ExPEC).